The sequence spans 355 residues: tRNA N6-adenosine threonylcarbamoyltransferase (355 aa).

Positions 111 and 115 each coordinate Fe cation. Substrate contacts are provided by residues 134–138, Asp-167, Gly-180, Asp-184, and Asn-279; that span reads LVSGG. Asp-307 is a binding site for Fe cation.

The protein belongs to the KAE1 / TsaD family. It depends on Fe(2+) as a cofactor.

It is found in the cytoplasm. It carries out the reaction L-threonylcarbamoyladenylate + adenosine(37) in tRNA = N(6)-L-threonylcarbamoyladenosine(37) in tRNA + AMP + H(+). In terms of biological role, required for the formation of a threonylcarbamoyl group on adenosine at position 37 (t(6)A37) in tRNAs that read codons beginning with adenine. Is involved in the transfer of the threonylcarbamoyl moiety of threonylcarbamoyl-AMP (TC-AMP) to the N6 group of A37, together with TsaE and TsaB. TsaD likely plays a direct catalytic role in this reaction. The chain is tRNA N6-adenosine threonylcarbamoyltransferase from Picosynechococcus sp. (strain ATCC 27264 / PCC 7002 / PR-6) (Agmenellum quadruplicatum).